Reading from the N-terminus, the 307-residue chain is Ribosomal RNA small subunit methyltransferase H (307 aa).

Residues 33 to 35, Asp-51, Phe-82, Asp-96, and Gln-103 each bind S-adenosyl-L-methionine; that span reads GGY.

The protein belongs to the methyltransferase superfamily. RsmH family.

The protein resides in the cytoplasm. The enzyme catalyses cytidine(1402) in 16S rRNA + S-adenosyl-L-methionine = N(4)-methylcytidine(1402) in 16S rRNA + S-adenosyl-L-homocysteine + H(+). Its function is as follows. Specifically methylates the N4 position of cytidine in position 1402 (C1402) of 16S rRNA. This is Ribosomal RNA small subunit methyltransferase H from Rickettsia africae (strain ESF-5).